A 224-amino-acid polypeptide reads, in one-letter code: MNLKNKSIVVLLSGGLDSSTVTGIAKKSEAKIFGLSFDYGQRHKKELNSASIIAKHFDIEEFKIIKLDLSLWGGSSLTDSQKNIPIEGVQANKIPNTYVPGRNTIFISVALSYAEAIDADFIGLGVNALDYSGYPDCRPDYIKKFQELADLANKRGRENNPIKLWTPLLDLNKEEIIKLAFDNHVPFDKTWSCYSGNSKPCGKCDSCRIRNAAYEKWLNNKNKK.

12 to 22 contributes to the ATP binding site; that stretch reads LSGGLDSSTVT. Zn(2+) is bound by residues cysteine 193, cysteine 201, cysteine 204, and cysteine 207.

The protein belongs to the QueC family. It depends on Zn(2+) as a cofactor.

The enzyme catalyses 7-carboxy-7-deazaguanine + NH4(+) + ATP = 7-cyano-7-deazaguanine + ADP + phosphate + H2O + H(+). Its pathway is purine metabolism; 7-cyano-7-deazaguanine biosynthesis. Its function is as follows. Catalyzes the ATP-dependent conversion of 7-carboxy-7-deazaguanine (CDG) to 7-cyano-7-deazaguanine (preQ(0)). This chain is 7-cyano-7-deazaguanine synthase, found in Prochlorococcus marinus (strain MIT 9301).